A 236-amino-acid chain; its full sequence is 2-C-methyl-D-erythritol 4-phosphate cytidylyltransferase (236 aa).

This sequence belongs to the IspD/TarI cytidylyltransferase family. IspD subfamily.

The catalysed reaction is 2-C-methyl-D-erythritol 4-phosphate + CTP + H(+) = 4-CDP-2-C-methyl-D-erythritol + diphosphate. It participates in isoprenoid biosynthesis; isopentenyl diphosphate biosynthesis via DXP pathway; isopentenyl diphosphate from 1-deoxy-D-xylulose 5-phosphate: step 2/6. In terms of biological role, catalyzes the formation of 4-diphosphocytidyl-2-C-methyl-D-erythritol from CTP and 2-C-methyl-D-erythritol 4-phosphate (MEP). This chain is 2-C-methyl-D-erythritol 4-phosphate cytidylyltransferase, found in Burkholderia pseudomallei (strain 1106a).